The sequence spans 319 residues: 4-diphosphocytidyl-2-C-methyl-D-erythritol kinase (319 aa).

Lys-18 is an active-site residue. Pro-103–Thr-113 provides a ligand contact to ATP. The active site involves Asp-145.

This sequence belongs to the GHMP kinase family. IspE subfamily.

It catalyses the reaction 4-CDP-2-C-methyl-D-erythritol + ATP = 4-CDP-2-C-methyl-D-erythritol 2-phosphate + ADP + H(+). It participates in isoprenoid biosynthesis; isopentenyl diphosphate biosynthesis via DXP pathway; isopentenyl diphosphate from 1-deoxy-D-xylulose 5-phosphate: step 3/6. Catalyzes the phosphorylation of the position 2 hydroxy group of 4-diphosphocytidyl-2C-methyl-D-erythritol. The polypeptide is 4-diphosphocytidyl-2-C-methyl-D-erythritol kinase (Prochlorococcus marinus (strain NATL2A)).